The sequence spans 272 residues: Putative phosphatase BU028/BU029 (272 aa).

The Nucleophile role is filled by D8. D8 contributes to the Mg(2+) binding site. Phosphate is bound at residue L9. A Mg(2+)-binding site is contributed by D10. Phosphate-binding positions include 42–43 (SG) and K191. D214 lines the Mg(2+) pocket. Phosphate is bound at residue N217.

It belongs to the HAD-like hydrolase superfamily. Cof family. It depends on Mg(2+) as a cofactor.

This is Putative phosphatase BU028/BU029 from Buchnera aphidicola subsp. Acyrthosiphon pisum (strain APS) (Acyrthosiphon pisum symbiotic bacterium).